The primary structure comprises 483 residues: Xylulose kinase (483 aa).

79 to 80 contacts substrate; the sequence is MH.

Belongs to the FGGY kinase family.

The catalysed reaction is D-xylulose + ATP = D-xylulose 5-phosphate + ADP + H(+). Catalyzes the phosphorylation of D-xylulose to D-xylulose 5-phosphate. The chain is Xylulose kinase from Staphylococcus xylosus.